Consider the following 331-residue polypeptide: GTP 3',8-cyclase (331 aa).

In terms of domain architecture, Radical SAM core spans 9–233; that stretch reads SFGRQVTYVR…TATNEHTGGP (225 aa). A GTP-binding site is contributed by R18. C25 and C29 together coordinate [4Fe-4S] cluster. Y31 lines the S-adenosyl-L-methionine pocket. C32 provides a ligand contact to [4Fe-4S] cluster. R67 lines the GTP pocket. G71 serves as a coordination point for S-adenosyl-L-methionine. T98 serves as a coordination point for GTP. S-adenosyl-L-methionine is bound at residue S122. A GTP-binding site is contributed by K159. S-adenosyl-L-methionine is bound at residue M193. [4Fe-4S] cluster-binding residues include C257 and C260. Position 262-264 (262-264) interacts with GTP; the sequence is RVR. C274 is a binding site for [4Fe-4S] cluster.

The protein belongs to the radical SAM superfamily. MoaA family. In terms of assembly, monomer and homodimer. The cofactor is [4Fe-4S] cluster.

It catalyses the reaction GTP + AH2 + S-adenosyl-L-methionine = (8S)-3',8-cyclo-7,8-dihydroguanosine 5'-triphosphate + 5'-deoxyadenosine + L-methionine + A + H(+). It functions in the pathway cofactor biosynthesis; molybdopterin biosynthesis. In terms of biological role, catalyzes the cyclization of GTP to (8S)-3',8-cyclo-7,8-dihydroguanosine 5'-triphosphate. The protein is GTP 3',8-cyclase of Saccharophagus degradans (strain 2-40 / ATCC 43961 / DSM 17024).